The following is a 575-amino-acid chain: Amino-acid acetyltransferase, mitochondrial (575 aa).

The N-terminal 35 residues, 1–35 (MSKLRNLNRQFISNLKTHETVTNAKRNLILSILKS), are a transit peptide targeting the mitochondrion. One can recognise an N-acetyltransferase domain in the interval 398-557 (FTLNNLVQDG…QGIPGGVNIH (160 aa)).

It belongs to the acetyltransferase family.

It localises to the mitochondrion. It catalyses the reaction L-glutamate + acetyl-CoA = N-acetyl-L-glutamate + CoA + H(+). The protein operates within amino-acid biosynthesis; L-arginine biosynthesis; N(2)-acetyl-L-ornithine from L-glutamate: step 1/4. Functionally, N-acetylglutamate synthase involved in arginine biosynthesis. This Debaryomyces hansenii (strain ATCC 36239 / CBS 767 / BCRC 21394 / JCM 1990 / NBRC 0083 / IGC 2968) (Yeast) protein is Amino-acid acetyltransferase, mitochondrial (ARG2).